The sequence spans 390 residues: uncharacterized protein (390 aa).

Belongs to the peptidase M24 family.

This is an uncharacterized protein from Sinorhizobium fredii (strain NBRC 101917 / NGR234).